The following is a 419-amino-acid chain: Tetraspanning orphan receptor (419 aa).

Residues 1–28 are Cytoplasmic-facing; the sequence is MPRAPALLTNDARHQFTCCLCLHVRTGT. A helical membrane pass occupies residues 29–49; sequence IIFGITQIIIQLVFISFLFLM. Residues 50–165 lie on the Extracellular side of the membrane; that stretch reads TFNPRLIPED…EVKIKHFSPY (116 aa). The helical transmembrane segment at 166–186 threads the bilayer; that stretch reads IAVCVTTFSLAFCCFMVHGAI. Topologically, residues 187 to 193 are cytoplasmic; it reads TKQPTHL. A helical transmembrane segment spans residues 194 to 214; sequence LPFFFIQVFDLIICLIHILGF. The Extracellular segment spans residues 215-240; that stretch reads MSSTSDLRLMIHTKTGPIYIKSTGFT. The chain crosses the membrane as a helical span at residues 241 to 261; it reads FIILSISCMMLAFKAYCLGMV. Over 262–419 the chain is Cytoplasmic; the sequence is WDCYKYLMLN…SAPSNAHSSC (158 aa). Positions 303–316 are enriched in low complexity; sequence NNSIGNSGSPNEPN. Residues 303-328 are disordered; that stretch reads NNSIGNSGSPNEPNTRPRPEPITYDP.

As to quaternary structure, interacts (via N-terminal extracellular domain) with human C2a. In terms of processing, phosphorylated on tyrosine residues.

The protein localises to the cell membrane. Cell surface receptor that binds to human complement C2a protein. This results in inhibition of the classical and lectin pathways of complement activation, probably due to interference with binding of C2a to C4b and interference with cleavage by C1 or MASP2 such that C3 convertase cannot be formed. This infers resistance to complement-mediated cell lysis, allowing parasite survival and infection. The sequence is that of Tetraspanning orphan receptor from Schistosoma mansoni (Blood fluke).